Here is a 507-residue protein sequence, read N- to C-terminus: Glutamyl-tRNA(Gln) amidotransferase subunit A, mitochondrial (507 aa).

Residues 29-51 (THPPEPIPPPPPPAPSSSPSPKQ) form a disordered region. Residues 31-46 (PPEPIPPPPPPAPSSS) show a composition bias toward pro residues. Active-site charge relay system residues include lysine 57 and serine 135. Catalysis depends on serine 159, which acts as the Acyl-ester intermediate.

This sequence belongs to the amidase family. GatA subfamily. As to quaternary structure, subunit of the heterotrimeric GatCAB amidotransferase (AdT) complex, composed of A, B and C subunits.

It localises to the mitochondrion. The catalysed reaction is L-glutamyl-tRNA(Gln) + L-glutamine + ATP + H2O = L-glutaminyl-tRNA(Gln) + L-glutamate + ADP + phosphate + H(+). Functionally, allows the formation of correctly charged Gln-tRNA(Gln) through the transamidation of misacylated Glu-tRNA(Gln) in the mitochondria. The reaction takes place in the presence of glutamine and ATP through an activated gamma-phospho-Glu-tRNA(Gln). In Podospora anserina (strain S / ATCC MYA-4624 / DSM 980 / FGSC 10383) (Pleurage anserina), this protein is Glutamyl-tRNA(Gln) amidotransferase subunit A, mitochondrial.